A 729-amino-acid polypeptide reads, in one-letter code: Polyribonucleotide nucleotidyltransferase (729 aa).

Mg(2+)-binding residues include Asp509 and Asp515. Residues 575-634 enclose the KH domain; the sequence is PRVISVKIPVDKIGEVIGPKGKMINQIQADSGAEITVEDDGTIYIGAVDGPSAESARSAI. Residues 646–718 form the S1 motif domain; it reads GERYLGTIVK…SRGKISLSPS (73 aa).

Belongs to the polyribonucleotide nucleotidyltransferase family. The cofactor is Mg(2+).

Its subcellular location is the cytoplasm. It catalyses the reaction RNA(n+1) + phosphate = RNA(n) + a ribonucleoside 5'-diphosphate. Involved in mRNA degradation. Catalyzes the phosphorolysis of single-stranded polyribonucleotides processively in the 3'- to 5'-direction. The chain is Polyribonucleotide nucleotidyltransferase from Frankia casuarinae (strain DSM 45818 / CECT 9043 / HFP020203 / CcI3).